The primary structure comprises 148 residues: Large ribosomal subunit protein bL27m (148 aa).

A mitochondrion-targeting transit peptide spans 1 to 30 (MALAVLAWRTRTAVIALLSPPQAAALAVRY).

The protein belongs to the bacterial ribosomal protein bL27 family. As to quaternary structure, component of the mitochondrial ribosome large subunit (39S) which comprises a 16S rRNA and about 50 distinct proteins.

Its subcellular location is the mitochondrion. This Bos taurus (Bovine) protein is Large ribosomal subunit protein bL27m (MRPL27).